A 158-amino-acid polypeptide reads, in one-letter code: SsrA-binding protein (158 aa).

The segment at 135–158 (DKRKTLKDRDWERDKQRGFKKDLD) is disordered. A compositionally biased stretch (basic and acidic residues) spans 141–158 (KDRDWERDKQRGFKKDLD).

This sequence belongs to the SmpB family.

It is found in the cytoplasm. Its function is as follows. Required for rescue of stalled ribosomes mediated by trans-translation. Binds to transfer-messenger RNA (tmRNA), required for stable association of tmRNA with ribosomes. tmRNA and SmpB together mimic tRNA shape, replacing the anticodon stem-loop with SmpB. tmRNA is encoded by the ssrA gene; the 2 termini fold to resemble tRNA(Ala) and it encodes a 'tag peptide', a short internal open reading frame. During trans-translation Ala-aminoacylated tmRNA acts like a tRNA, entering the A-site of stalled ribosomes, displacing the stalled mRNA. The ribosome then switches to translate the ORF on the tmRNA; the nascent peptide is terminated with the 'tag peptide' encoded by the tmRNA and targeted for degradation. The ribosome is freed to recommence translation, which seems to be the essential function of trans-translation. This Psychrobacter arcticus (strain DSM 17307 / VKM B-2377 / 273-4) protein is SsrA-binding protein.